The following is a 985-amino-acid chain: Translation initiation factor IF-2 (985 aa).

Basic and acidic residues-rich tracts occupy residues 49 to 58, 65 to 89, and 99 to 113; these read QYGKKQEKSS, IQREHGRGQGMEDKKEKDQLFRPDN, and VPNRPPDRRYEDKAK. Residues 49-401 are disordered; that stretch reads QYGKKQEKSS…QQSAPPPILD (353 aa). Polar residues predominate over residues 125-136; it reads SKTTTNSENEQT. The span at 137 to 162 shows a compositional bias: low complexity; the sequence is APRQGSAQQSGQGRPQANRPQGSQGR. Gly residues-rich tracts occupy residues 180–246 and 288–324; these read PQGG…GQGR and PQGGQGRPYGDRPQGGQGRHYGDRPQGGQGRPQGAGR. Over residues 349–377 the composition is skewed to basic and acidic residues; it reads KAPDKTKGDRRKNYEKDGKWADGQIEKNK. Basic residues predominate over residues 378–391; that stretch reads LFKGRNNKNKKRQH. The region spanning 485–654 is the tr-type G domain; that stretch reads LRPPVVTIMG…LLVAEVHELK (170 aa). A G1 region spans residues 494–501; it reads GHVDHGKT. 494–501 provides a ligand contact to GTP; the sequence is GHVDHGKT. The G2 stretch occupies residues 519–523; the sequence is GITQH. The tract at residues 540–543 is G3; sequence DTPG. Residues 540 to 544 and 594 to 597 each bind GTP; these read DTPGH and NKMD. The segment at 594-597 is G4; the sequence is NKMD. The segment at 630 to 632 is G5; sequence SAK.

Belongs to the TRAFAC class translation factor GTPase superfamily. Classic translation factor GTPase family. IF-2 subfamily.

The protein resides in the cytoplasm. In terms of biological role, one of the essential components for the initiation of protein synthesis. Protects formylmethionyl-tRNA from spontaneous hydrolysis and promotes its binding to the 30S ribosomal subunits. Also involved in the hydrolysis of GTP during the formation of the 70S ribosomal complex. This Desulforamulus reducens (strain ATCC BAA-1160 / DSM 100696 / MI-1) (Desulfotomaculum reducens) protein is Translation initiation factor IF-2.